We begin with the raw amino-acid sequence, 27 residues long: CPRILMKCKLDTDCFPTCTCRPSGFCG.

Disulfide bonds link cysteine 1-cysteine 18, cysteine 8-cysteine 20, and cysteine 14-cysteine 26.

Its subcellular location is the secreted. Inhibits trypsin. This Sechium edule (Chayote) protein is Trypsin inhibitor 5.